The following is a 287-amino-acid chain: MHYKKAFLASLLSSIALTAYAPPEPWATLTPSSKMDGGTTEYRTSFGLAVIPFTVTESKVKRNVISQINDGQVQVTTQKLPHPVSQIGDGQIQVTTQKVPPVVSHIVSQIGDGQLQITTAKNVVTKSTIAVPSKTATATATSTATAVSQIHDGQVQVTISSASSSSVLSKSKLEPTKKPNNENVIKVQACKSSGTLAITLQGGVLIDSNGRIGSIVANRQFQFDGPPPQAGAIYAGGWSITKHGTLAIGDNDVFYQCLSGTFYNLYDQSIGGQCNPVHLQTVGLVDC.

An N-terminal signal peptide occupies residues 1-21 (MHYKKAFLASLLSSIALTAYA). Residues 22–62 (PPEPWATLTPSSKMDGGTTEYRTSFGLAVIPFTVTESKVKR) constitute a propeptide that is removed on maturation. PIR1/2/3 repeat units follow at residues 62–80 (RNVISQINDGQVQVTTQKL), 81–99 (PHPVSQIGDGQIQVTTQKV), 104–122 (SHIVSQIGDGQLQITTAKN), and 144–162 (ATAVSQIHDGQVQVTISSA).

It belongs to the PIR protein family. In terms of processing, covalently linked to beta-1,3-glucan of the inner cell wall layer via an alkali-sensitive ester linkage between the gamma-carboxyl group of glutamic acids, arising from specific glutamines within the PIR1/2/3 repeats, and hydroxyl groups of glucoses of beta-1,3-glucan chains.

It localises to the secreted. It is found in the cell wall. Component of the outer cell wall layer. May be involved in meiosis and sporulation. The protein is Cell wall protein PIR5 (PIR5) of Saccharomyces cerevisiae (strain RM11-1a) (Baker's yeast).